A 319-amino-acid chain; its full sequence is G-protein coupled receptor 171 (319 aa).

The Extracellular segment spans residues 1–21 (MTNSSFFCPVYKDLEPFTYFF). N-linked (GlcNAc...) asparagine glycosylation occurs at N3. A helical membrane pass occupies residues 22–42 (YLVFLVGIIGSCFATWAFIQK). At 43–48 (NTNHRC) the chain is on the cytoplasmic side. The helical transmembrane segment at 49–69 (VSIYLINLLTADFLLTLALPV) threads the bilayer. The Extracellular segment spans residues 70-89 (KIVVDLGVAPWKLKIFHCQV). The helical transmembrane segment at 90–110 (TACLIYINMYLSIIFLAFVSI) threads the bilayer. Residues 111–132 (DRCLQLTHSCKIYRIQEPGFAK) lie on the Cytoplasmic side of the membrane. Residues 133-153 (MISTVVWLMVLLIMVPNMMIP) form a helical membrane-spanning segment. The Extracellular segment spans residues 154–181 (IKDIKEKSNVGCMEFKKEFGRNWHLLTN). A helical membrane pass occupies residues 182–202 (FICVAIFLNFSAIILISNCLV). Over 203-224 (IRQLYRNKDNENYPNVKKALIN) the chain is Cytoplasmic. Residues 225-245 (ILLVTTGYIICFVPYHIVRIP) form a helical membrane-spanning segment. Over 246–268 (YTLSQTEVITDCSTRISLFKAKE) the chain is Extracellular. The helical transmembrane segment at 269–289 (ATLLLAVSNLCFDPILYYHLS) threads the bilayer. The Cytoplasmic portion of the chain corresponds to 290 to 319 (KAFRSKVTETFASPKETKAQKEKLRCENNA).

This sequence belongs to the G-protein coupled receptor 1 family. Expressed in both T-cell subsets and natural killer cells, while it is undetectable in B cells or CD14(+) monocytes. Expressed in peripheral blood mononuclear cells (PBMC) and Jurkat cells (at protein level).

Its subcellular location is the cell membrane. G-protein coupled receptor for Big LEN, a 16-amino acid neuropeptide produced from the precursor protein, proSAAS (encoded by PCSK1N). Acts through a G(i)-alpha-mediated pathway in response to Big LEN. Big LEN-GPR171 system plays an important role in regulating feeding and metabolism. Also plays a role in modulating fear and anxiety-like behaviors in the basolateral amygdala. Big LEN-GPR171 modulates the mu-type opioid receptor signaling and antinociception. Acts as a negative regulator T cell function. In Homo sapiens (Human), this protein is G-protein coupled receptor 171.